We begin with the raw amino-acid sequence, 176 residues long: Xanthine-guanine phosphoribosyltransferase (176 aa).

Residues 51–52 and 110–118 each bind 5-phospho-alpha-D-ribose 1-diphosphate; these read RG and DDLVDTGKT. Position 111 (Asp111) interacts with Mg(2+). Residues Asp114 and Ile157 each coordinate guanine. Residues Asp114 and Ile157 each coordinate xanthine. GMP contacts are provided by residues 114–118 and 156–157; these read DTGKT and WI.

It belongs to the purine/pyrimidine phosphoribosyltransferase family. XGPT subfamily. Homotetramer. Mg(2+) serves as cofactor.

The protein resides in the cell inner membrane. It carries out the reaction GMP + diphosphate = guanine + 5-phospho-alpha-D-ribose 1-diphosphate. It catalyses the reaction XMP + diphosphate = xanthine + 5-phospho-alpha-D-ribose 1-diphosphate. The enzyme catalyses IMP + diphosphate = hypoxanthine + 5-phospho-alpha-D-ribose 1-diphosphate. The protein operates within purine metabolism; GMP biosynthesis via salvage pathway; GMP from guanine: step 1/1. Its pathway is purine metabolism; XMP biosynthesis via salvage pathway; XMP from xanthine: step 1/1. Its function is as follows. Purine salvage pathway enzyme that catalyzes the transfer of the ribosyl-5-phosphate group from 5-phospho-alpha-D-ribose 1-diphosphate (PRPP) to the N9 position of the 6-oxopurines guanine and xanthine to form the corresponding ribonucleotides GMP (guanosine 5'-monophosphate) and XMP (xanthosine 5'-monophosphate), with the release of PPi. To a lesser extent, also acts on hypoxanthine. In Bradyrhizobium diazoefficiens (strain JCM 10833 / BCRC 13528 / IAM 13628 / NBRC 14792 / USDA 110), this protein is Xanthine-guanine phosphoribosyltransferase.